The sequence spans 179 residues: Large ribosomal subunit protein bL9 (179 aa).

It belongs to the bacterial ribosomal protein bL9 family.

In terms of biological role, binds to the 23S rRNA. This is Large ribosomal subunit protein bL9 from Bartonella bacilliformis (strain ATCC 35685 / KC583 / Herrer 020/F12,63).